The primary structure comprises 674 residues: UvrABC system protein C (674 aa).

Positions 64–142 constitute a GIY-YIG domain; the sequence is NGPGVYRMLN…IKRLRPRFNV (79 aa). The UVR domain maps to 252–287; that stretch reads QAVKATIASAMAEASENLDFERAALYRDRLAALSHV.

It belongs to the UvrC family. Interacts with UvrB in an incision complex.

Its subcellular location is the cytoplasm. Its function is as follows. The UvrABC repair system catalyzes the recognition and processing of DNA lesions. UvrC both incises the 5' and 3' sides of the lesion. The N-terminal half is responsible for the 3' incision and the C-terminal half is responsible for the 5' incision. In Rhizobium meliloti (strain 1021) (Ensifer meliloti), this protein is UvrABC system protein C.